Consider the following 160-residue polypeptide: Large ribosomal subunit protein uL15 (160 aa).

Residues 1–11 (MKLNELRDNHG) are compositionally biased toward basic and acidic residues. Positions 1–39 (MKLNELRDNHGARPKSKRLGRGIGSGKGKTSGKGVKGQK) are disordered. The segment covering 21-35 (RGIGSGKGKTSGKGV) has biased composition (gly residues).

The protein belongs to the universal ribosomal protein uL15 family. As to quaternary structure, part of the 50S ribosomal subunit.

Its function is as follows. Binds to the 23S rRNA. The sequence is that of Large ribosomal subunit protein uL15 from Granulibacter bethesdensis (strain ATCC BAA-1260 / CGDNIH1).